The primary structure comprises 275 residues: 2,3,4,5-tetrahydropyridine-2,6-dicarboxylate N-succinyltransferase (275 aa).

Substrate contacts are provided by R106 and D143.

It belongs to the transferase hexapeptide repeat family. As to quaternary structure, homotrimer.

The protein resides in the cytoplasm. It catalyses the reaction (S)-2,3,4,5-tetrahydrodipicolinate + succinyl-CoA + H2O = (S)-2-succinylamino-6-oxoheptanedioate + CoA. It participates in amino-acid biosynthesis; L-lysine biosynthesis via DAP pathway; LL-2,6-diaminopimelate from (S)-tetrahydrodipicolinate (succinylase route): step 1/3. The chain is 2,3,4,5-tetrahydropyridine-2,6-dicarboxylate N-succinyltransferase from Paraburkholderia xenovorans (strain LB400).